Here is a 62-residue protein sequence, read N- to C-terminus: Large ribosomal subunit protein uL29 (62 aa).

Belongs to the universal ribosomal protein uL29 family.

This is Large ribosomal subunit protein uL29 from Helicobacter hepaticus (strain ATCC 51449 / 3B1).